The primary structure comprises 334 residues: tRNA-dihydrouridine(20/20a) synthase (334 aa).

FMN-binding positions include 17 to 19 (PMM) and Q70. The active-site Proton donor is the C100. Residues K139, H171, 211 to 213 (NGG), and 233 to 234 (GR) contribute to the FMN site.

The protein belongs to the Dus family. DusA subfamily. FMN is required as a cofactor.

It catalyses the reaction 5,6-dihydrouridine(20) in tRNA + NADP(+) = uridine(20) in tRNA + NADPH + H(+). The enzyme catalyses 5,6-dihydrouridine(20) in tRNA + NAD(+) = uridine(20) in tRNA + NADH + H(+). It carries out the reaction 5,6-dihydrouridine(20a) in tRNA + NADP(+) = uridine(20a) in tRNA + NADPH + H(+). The catalysed reaction is 5,6-dihydrouridine(20a) in tRNA + NAD(+) = uridine(20a) in tRNA + NADH + H(+). In terms of biological role, catalyzes the synthesis of 5,6-dihydrouridine (D), a modified base found in the D-loop of most tRNAs, via the reduction of the C5-C6 double bond in target uridines. Specifically modifies U20 and U20a in tRNAs. The chain is tRNA-dihydrouridine(20/20a) synthase (dus2) from Synechocystis sp. (strain ATCC 27184 / PCC 6803 / Kazusa).